The sequence spans 193 residues: Putative nitroreductase HBN1 (193 aa).

Ser2 is subject to N-acetylserine.

Belongs to the nitroreductase family. FMN is required as a cofactor.

Its subcellular location is the cytoplasm. It is found in the nucleus. The sequence is that of Putative nitroreductase HBN1 (HBN1) from Saccharomyces cerevisiae (strain ATCC 204508 / S288c) (Baker's yeast).